The sequence spans 468 residues: Immunoglobulin superfamily member 21 (468 aa).

A signal peptide spans 1–24 (MRAAPSLRRASCLLLAAILDLARG). Ig-like domains follow at residues 25–132 (YLTV…VVLA) and 344–429 (PKIM…TRLI). C46 and C116 are disulfide-bonded.

As to quaternary structure, interacts (Ig-like 1 domain) with NRXN2 (via Laminin G-like 1 domain) in a trans-interaction manner. In terms of tissue distribution, expressed in brain.

It localises to the postsynaptic cell membrane. In terms of biological role, involved in synaptic inhibition in the brain. Selectively regulates inhibitory presynaptic differentiation through interacting with presynaptic NRXN2. In Rattus norvegicus (Rat), this protein is Immunoglobulin superfamily member 21.